We begin with the raw amino-acid sequence, 346 residues long: Serine/threonine-protein phosphatase PP1(5.9) (346 aa).

Asp102, His104, Asp130, and Asn162 together coordinate Mn(2+). His163 serves as the catalytic Proton donor. Mn(2+)-binding residues include His211 and His287.

This sequence belongs to the PPP phosphatase family. PP-1 subfamily. The cofactor is Mn(2+).

It catalyses the reaction O-phospho-L-seryl-[protein] + H2O = L-seryl-[protein] + phosphate. The catalysed reaction is O-phospho-L-threonyl-[protein] + H2O = L-threonyl-[protein] + phosphate. The polypeptide is Serine/threonine-protein phosphatase PP1(5.9) (Trypanosoma brucei brucei).